Consider the following 207-residue polypeptide: 2,3-bisphosphoglycerate-dependent phosphoglycerate mutase (207 aa).

Residues 10 to 17 (RHGQSEWN), 23 to 24 (TG), Arg-62, 89 to 92 (ERDY), Lys-100, 116 to 117 (RR), and 160 to 161 (GN) each bind substrate. The active-site Tele-phosphohistidine intermediate is His-11. The active-site Proton donor/acceptor is Glu-89.

It belongs to the phosphoglycerate mutase family. BPG-dependent PGAM subfamily. Homodimer.

The enzyme catalyses (2R)-2-phosphoglycerate = (2R)-3-phosphoglycerate. The protein operates within carbohydrate degradation; glycolysis; pyruvate from D-glyceraldehyde 3-phosphate: step 3/5. Functionally, catalyzes the interconversion of 2-phosphoglycerate and 3-phosphoglycerate. The protein is 2,3-bisphosphoglycerate-dependent phosphoglycerate mutase of Bradyrhizobium sp. (strain BTAi1 / ATCC BAA-1182).